Consider the following 171-residue polypeptide: Photosystem I assembly protein Ycf3 (171 aa).

TPR repeat units follow at residues 35–68 (AFTY…EIDP), 72–105 (SYIL…NPSL), and 120–153 (GEQA…APSN).

It belongs to the Ycf3 family.

It localises to the plastid. The protein localises to the chloroplast thylakoid membrane. Its function is as follows. Essential for the assembly of the photosystem I (PSI) complex. May act as a chaperone-like factor to guide the assembly of the PSI subunits. This chain is Photosystem I assembly protein Ycf3, found in Angiopteris evecta (Mule's foot fern).